The sequence spans 1128 residues: Nck-associated protein 1 (1128 aa).

Residues 640–665 are disordered; that stretch reads AVNKKSKKQTGKKGEPEREKPGVESM. The segment covering 651-665 has biased composition (basic and acidic residues); that stretch reads KKGEPEREKPGVESM. The chain crosses the membrane as a helical span at residues 995–1015; sequence IACLLMVFVAVSLPTLASNVM.

This sequence belongs to the HEM-1/HEM-2 family.

The protein resides in the cell membrane. The protein localises to the cell projection. It localises to the lamellipodium membrane. In terms of biological role, part of the WAVE complex that regulates lamellipodia formation. The WAVE complex regulates actin filament reorganization via its interaction with the Arp2/3 complex. Actin remodeling activity is regulated by RAC1. Plays a role in neural tube closure. In Xenopus laevis (African clawed frog), this protein is Nck-associated protein 1 (nckap1).